The sequence spans 341 residues: MAKSHTLNPEEEFEEESGLRPSLLSEFIGQKEVLNNLTVYVQAAKNRKRALDHVLISGPPGLGKTTLAGIVSNELGTRLTITSAPVITKGADLARLLTSVGENEILFIDEIHTLHKKLEEILYPAMENYMIDLVIGEGVTAQMVQIPLKPFTLVGATTRSGLISEPLKSRFGIQLRLDYYNDEEMKEIVLRSSRILGVKIEDDAALEIGKRSRKTPRIANHLLKRIRDFSEVEGNLSVKKGLCLKAFEKMGIDDLGLDGMDRQILGCMIDRYKGGPVGLKAIAVVVGEEEKTIEDTYESFMVRIGLINRTPAGRVATEKAYRQLKRMQDFSENHGQDPTLF.

Residues 1–180 are large ATPase domain (RuvB-L); sequence MAKSHTLNPE…FGIQLRLDYY (180 aa). Residues L19, R20, G61, K64, T65, T66, R170, Y180, and R217 each contribute to the ATP site. Position 65 (T65) interacts with Mg(2+). Positions 181–251 are small ATPAse domain (RuvB-S); it reads NDEEMKEIVL…LCLKAFEKMG (71 aa). The head domain (RuvB-H) stretch occupies residues 254 to 341; it reads DLGLDGMDRQ…ENHGQDPTLF (88 aa). DNA is bound by residues R309 and R314.

Belongs to the RuvB family. In terms of assembly, homohexamer. Forms an RuvA(8)-RuvB(12)-Holliday junction (HJ) complex. HJ DNA is sandwiched between 2 RuvA tetramers; dsDNA enters through RuvA and exits via RuvB. An RuvB hexamer assembles on each DNA strand where it exits the tetramer. Each RuvB hexamer is contacted by two RuvA subunits (via domain III) on 2 adjacent RuvB subunits; this complex drives branch migration. In the full resolvosome a probable DNA-RuvA(4)-RuvB(12)-RuvC(2) complex forms which resolves the HJ.

It is found in the cytoplasm. The enzyme catalyses ATP + H2O = ADP + phosphate + H(+). Functionally, the RuvA-RuvB-RuvC complex processes Holliday junction (HJ) DNA during genetic recombination and DNA repair, while the RuvA-RuvB complex plays an important role in the rescue of blocked DNA replication forks via replication fork reversal (RFR). RuvA specifically binds to HJ cruciform DNA, conferring on it an open structure. The RuvB hexamer acts as an ATP-dependent pump, pulling dsDNA into and through the RuvAB complex. RuvB forms 2 homohexamers on either side of HJ DNA bound by 1 or 2 RuvA tetramers; 4 subunits per hexamer contact DNA at a time. Coordinated motions by a converter formed by DNA-disengaged RuvB subunits stimulates ATP hydrolysis and nucleotide exchange. Immobilization of the converter enables RuvB to convert the ATP-contained energy into a lever motion, pulling 2 nucleotides of DNA out of the RuvA tetramer per ATP hydrolyzed, thus driving DNA branch migration. The RuvB motors rotate together with the DNA substrate, which together with the progressing nucleotide cycle form the mechanistic basis for DNA recombination by continuous HJ branch migration. Branch migration allows RuvC to scan DNA until it finds its consensus sequence, where it cleaves and resolves cruciform DNA. The polypeptide is Holliday junction branch migration complex subunit RuvB (Leptospira borgpetersenii serovar Hardjo-bovis (strain JB197)).